A 550-amino-acid chain; its full sequence is Hydroxylamine reductase (550 aa).

[2Fe-2S] cluster-binding residues include C3, C6, C18, and C25. Hybrid [4Fe-2O-2S] cluster contacts are provided by H249, E273, C317, C405, C433, C458, E492, and K494. C405 bears the Cysteine persulfide mark.

Belongs to the HCP family. Requires [2Fe-2S] cluster as cofactor. Hybrid [4Fe-2O-2S] cluster is required as a cofactor.

Its subcellular location is the cytoplasm. It catalyses the reaction A + NH4(+) + H2O = hydroxylamine + AH2 + H(+). Its function is as follows. Catalyzes the reduction of hydroxylamine to form NH(3) and H(2)O. The protein is Hydroxylamine reductase of Escherichia coli (strain SMS-3-5 / SECEC).